Reading from the N-terminus, the 297-residue chain is Juvenile hormone acid O-methyltransferase (297 aa).

This sequence belongs to the methyltransferase superfamily. Predominantly expressed in corpora allata. Also expressed at low level in testis.

It carries out the reaction (2E,6E)-farnesoate + S-adenosyl-L-methionine = methyl (2E,6E)-farnesoate + S-adenosyl-L-homocysteine. The catalysed reaction is juvenile hormone III carboxylate + S-adenosyl-L-methionine = juvenile hormone III + S-adenosyl-L-homocysteine. Its function is as follows. O-methyltransferase that transfers a methyl group from S-adenosyl-L-methionine (SAM) to the carboxyl group of juvenile hormone acids to produce active juvenile hormones in the corpora allata, the last step during juvenile hormone biosynthesis. Also able to methylate farnesoate to methyl farnesoate. In Drosophila melanogaster (Fruit fly), this protein is Juvenile hormone acid O-methyltransferase.